The sequence spans 161 residues: Putative sporulation sigma factor-processing peptidase (161 aa).

Asp-38 is an active-site residue.

The protein belongs to the peptidase U4 family.

In terms of biological role, probably activates the RNA polymerase sigma-35 factor at the stage II of sporulation. The protein is Putative sporulation sigma factor-processing peptidase of Bacillus thuringiensis subsp. kurstaki.